A 152-amino-acid polypeptide reads, in one-letter code: Protein SprT-like (152 aa).

The region spanning 13–148 (NYVKKVSIED…FACGYCHGRL (136 aa)) is the SprT-like domain. A Zn(2+)-binding site is contributed by H72. E73 is an active-site residue. Residue H76 participates in Zn(2+) binding.

Belongs to the SprT family. Zn(2+) is required as a cofactor.

The protein localises to the cytoplasm. The sequence is that of Protein SprT-like from Streptococcus agalactiae serotype III (strain NEM316).